Reading from the N-terminus, the 396-residue chain is Mannonate dehydratase (396 aa).

This sequence belongs to the mannonate dehydratase family. Requires Fe(2+) as cofactor. Mn(2+) serves as cofactor.

It carries out the reaction D-mannonate = 2-dehydro-3-deoxy-D-gluconate + H2O. The protein operates within carbohydrate metabolism; pentose and glucuronate interconversion. Its function is as follows. Catalyzes the dehydration of D-mannonate. The chain is Mannonate dehydratase from Enterobacter sp. (strain 638).